Reading from the N-terminus, the 789-residue chain is Molybdenum cofactor sulfurase (789 aa).

At K251 the chain carries N6-(pyridoxal phosphate)lysine. The active site involves C422. Residues 628–789 form the MOSC domain; that stretch reads GDQVAQWLDQ…LICGETLEVD (162 aa). S741 carries the post-translational modification Phosphoserine.

The protein belongs to the class-V pyridoxal-phosphate-dependent aminotransferase family. MOCOS subfamily. Pyridoxal 5'-phosphate is required as a cofactor.

The enzyme catalyses Mo-molybdopterin + L-cysteine + AH2 = thio-Mo-molybdopterin + L-alanine + A + H2O. It functions in the pathway cofactor biosynthesis; molybdopterin biosynthesis. Its function is as follows. Sulfurates the molybdenum cofactor. Sulfation of molybdenum is essential for xanthine dehydrogenase (XDH) and aldehyde oxidase (ADO) enzymes in which molybdenum cofactor is liganded by 1 oxygen and 1 sulfur atom in active form. This Drosophila willistoni (Fruit fly) protein is Molybdenum cofactor sulfurase.